Here is a 432-residue protein sequence, read N- to C-terminus: uncharacterized protein (432 aa).

Disordered regions lie at residues Asp37–Cys61, Arg127–Tyr151, and Ser298–Cys378. A compositionally biased stretch (polar residues) spans Asp312–Pro335. A compositionally biased stretch (low complexity) spans Ser341–His366.

This is an uncharacterized protein from Arabidopsis thaliana (Mouse-ear cress).